The following is a 262-amino-acid chain: Carbonic anhydrase 13 (262 aa).

An Alpha-carbonic anhydrase domain is found at 4–261; that stretch reads LSWGYREHNG…LKGRKVRASF (258 aa). His-65 serves as the catalytic Proton donor/acceptor. Zn(2+)-binding residues include His-95, His-97, and His-120. 200 to 201 provides a ligand contact to substrate; that stretch reads TV.

Belongs to the alpha-carbonic anhydrase family. Requires Zn(2+) as cofactor. As to expression, expressed in thymus, small intestine, spleen, prostate, ovary, colon and testis.

The catalysed reaction is hydrogencarbonate + H(+) = CO2 + H2O. With respect to regulation, inhibited by acetazolamide. Reversible hydration of carbon dioxide. In Homo sapiens (Human), this protein is Carbonic anhydrase 13 (CA13).